A 411-amino-acid polypeptide reads, in one-letter code: [Pyruvate dehydrogenase (acetyl-transferring)] kinase isozyme 4, mitochondrial (411 aa).

One can recognise a Histidine kinase domain in the interval 138–368; that stretch reads IIEYKDACTV…DAIIYLKALS (231 aa). Residues 254 to 261, Asp293, 312 to 313, and 329 to 334 contribute to the ATP site; these read ELFKNAMR, ST, and GFGYGL.

This sequence belongs to the PDK/BCKDK protein kinase family. As to quaternary structure, homodimer. Interacts with the pyruvate dehydrogenase complex subunit DLAT, and is part of the multimeric pyruvate dehydrogenase complex that contains multiple copies of pyruvate dehydrogenase (E1), dihydrolipoamide acetyltransferase (DLAT, E2) and lipoamide dehydrogenase (DLD, E3). As to expression, ubiquitous; highest levels of expression in heart and skeletal muscle.

The protein resides in the mitochondrion matrix. It carries out the reaction L-seryl-[pyruvate dehydrogenase E1 alpha subunit] + ATP = O-phospho-L-seryl-[pyruvate dehydrogenase E1 alpha subunit] + ADP + H(+). In terms of biological role, kinase that plays a key role in regulation of glucose and fatty acid metabolism and homeostasis via phosphorylation of the pyruvate dehydrogenase subunits PDHA1 and PDHA2. This inhibits pyruvate dehydrogenase activity, and thereby regulates metabolite flux through the tricarboxylic acid cycle, down-regulates aerobic respiration and inhibits the formation of acetyl-coenzyme A from pyruvate. Inhibition of pyruvate dehydrogenase decreases glucose utilization and increases fat metabolism in response to prolonged fasting and starvation. Plays an important role in maintaining normal blood glucose levels under starvation, and is involved in the insulin signaling cascade. Via its regulation of pyruvate dehydrogenase activity, plays an important role in maintaining normal blood pH and in preventing the accumulation of ketone bodies under starvation. In the fed state, mediates cellular responses to glucose levels and to a high-fat diet. Regulates both fatty acid oxidation and de novo fatty acid biosynthesis. Plays a role in the generation of reactive oxygen species. Protects detached epithelial cells against anoikis. Plays a role in cell proliferation via its role in regulating carbohydrate and fatty acid metabolism. This Homo sapiens (Human) protein is [Pyruvate dehydrogenase (acetyl-transferring)] kinase isozyme 4, mitochondrial (PDK4).